Consider the following 364-residue polypeptide: CCA-adding enzyme (364 aa).

Residues glycine 19 and arginine 22 each coordinate ATP. Positions 19 and 22 each coordinate CTP. 2 residues coordinate Mg(2+): aspartate 32 and aspartate 34. Positions 102, 148, and 151 each coordinate ATP. 3 residues coordinate CTP: arginine 102, arginine 148, and arginine 151.

Belongs to the tRNA nucleotidyltransferase/poly(A) polymerase family. Bacterial CCA-adding enzyme type 2 subfamily. It depends on Mg(2+) as a cofactor.

The catalysed reaction is a tRNA precursor + 2 CTP + ATP = a tRNA with a 3' CCA end + 3 diphosphate. The enzyme catalyses a tRNA with a 3' CCA end + 2 CTP + ATP = a tRNA with a 3' CCACCA end + 3 diphosphate. In terms of biological role, catalyzes the addition and repair of the essential 3'-terminal CCA sequence in tRNAs without using a nucleic acid template. Adds these three nucleotides in the order of C, C, and A to the tRNA nucleotide-73, using CTP and ATP as substrates and producing inorganic pyrophosphate. tRNA 3'-terminal CCA addition is required both for tRNA processing and repair. Also involved in tRNA surveillance by mediating tandem CCA addition to generate a CCACCA at the 3' terminus of unstable tRNAs. While stable tRNAs receive only 3'-terminal CCA, unstable tRNAs are marked with CCACCA and rapidly degraded. In Bordetella bronchiseptica (strain ATCC BAA-588 / NCTC 13252 / RB50) (Alcaligenes bronchisepticus), this protein is CCA-adding enzyme.